The sequence spans 157 residues: Transcription elongation factor GreB (157 aa).

Positions 52–73 (KKLLREIDRRVRYLRKRLEDMR) form a coiled coil.

This sequence belongs to the GreA/GreB family. GreB subfamily.

Its function is as follows. Necessary for efficient RNA polymerase transcription elongation past template-encoded arresting sites. The arresting sites in DNA have the property of trapping a certain fraction of elongating RNA polymerases that pass through, resulting in locked ternary complexes. Cleavage of the nascent transcript by cleavage factors such as GreA or GreB allows the resumption of elongation from the new 3'terminus. GreB releases sequences of up to 9 nucleotides in length. The protein is Transcription elongation factor GreB of Pseudomonas syringae pv. tomato (strain ATCC BAA-871 / DC3000).